Here is a 402-residue protein sequence, read N- to C-terminus: Shaggy-related protein kinase GSK2 (402 aa).

Residues 1 to 38 are disordered; the sequence is MDQPAPAPEPMLLDAQPPAAVACDKKQQEGEAPYAEGN. Residues 63-347 form the Protein kinase domain; that stretch reads YMAERVVGTG…ALDACAHPFF (285 aa). Residues 69–77 and Lys92 each bind ATP; that span reads VGTGSFGIV. Asp188 functions as the Proton acceptor in the catalytic mechanism.

It belongs to the protein kinase superfamily. CMGC Ser/Thr protein kinase family. GSK-3 subfamily. Interacts with DLT. Interacts with OFP8. Interacts with GRF4. Interacts with PUB24. Interacts with SMOS1. Post-translationally, autophosphorylated. In terms of tissue distribution, expressed in lamina joints, vascular tissue and nodes.

The protein resides in the cytoplasm. Its subcellular location is the nucleus. The enzyme catalyses L-seryl-[protein] + ATP = O-phospho-L-seryl-[protein] + ADP + H(+). It catalyses the reaction L-threonyl-[protein] + ATP = O-phospho-L-threonyl-[protein] + ADP + H(+). Its function is as follows. Serine-threonine kinase that acts as a negative regulator of brassinosteroid (BR) signaling. Phosphorylates DLT and BZR1, two positive regulators that mediates several BR responses. Phosphorylation of DLT and BZR1 inhibits their activities in BR signaling. Phosphorylates OFP8, a positive regulator of BR responses. Phosphorylated OFP8 shuttles from the nucleus to the cytoplasm where it is degraded by the proteasome. Phosphorylates the E3 ubiquitin-protein ligase PUB24, a negative regulator of BR signaling, which targets BZR1 and promotes its degradation via the 26S proteasome. Phosphorylation of PUB24 increases its stability. Phosphorylates the AP2-ERF transcription factor SMOS1, a positive regulator of BR signaling, which cooperatively functions in a transactivating complex with BZR1 to enhance the transcription of BR biosynthetic genes. Phosphorylation of SMOS1 leads to its degradation by an unknown mechanism. This Oryza sativa subsp. japonica (Rice) protein is Shaggy-related protein kinase GSK2.